A 223-amino-acid polypeptide reads, in one-letter code: MIGKLTGRLDYKGSDHALIDVGGVGYVVHCSDRTLAALPARGEVVALYTDLLVREDLLQLFGFLSPYEKEWHRLLTSVQGVGAKASMAILGTLGVEGAARAITLGDATAIKAAPGVGPKLAQRVVMELKDKAPAVMAMGGTLDDAMDDVVDDMPGESAAPAPAPQPRAPKRPASNAQAEALSALQNLGYGPSDAAQAVAQAAESASNTPELIRAALRLLAPKE.

A domain I region spans residues 1–64 (MIGKLTGRLD…EDLLQLFGFL (64 aa)). The tract at residues 65-143 (SPYEKEWHRL…AVMAMGGTLD (79 aa)) is domain II. Residues 144-171 (DAMDDVVDDMPGESAAPAPAPQPRAPKR) form a flexible linker region. Residues 148 to 177 (DVVDDMPGESAAPAPAPQPRAPKRPASNAQ) are disordered. A domain III region spans residues 172 to 223 (PASNAQAEALSALQNLGYGPSDAAQAVAQAAESASNTPELIRAALRLLAPKE).

The protein belongs to the RuvA family. In terms of assembly, homotetramer. Forms an RuvA(8)-RuvB(12)-Holliday junction (HJ) complex. HJ DNA is sandwiched between 2 RuvA tetramers; dsDNA enters through RuvA and exits via RuvB. An RuvB hexamer assembles on each DNA strand where it exits the tetramer. Each RuvB hexamer is contacted by two RuvA subunits (via domain III) on 2 adjacent RuvB subunits; this complex drives branch migration. In the full resolvosome a probable DNA-RuvA(4)-RuvB(12)-RuvC(2) complex forms which resolves the HJ.

It is found in the cytoplasm. In terms of biological role, the RuvA-RuvB-RuvC complex processes Holliday junction (HJ) DNA during genetic recombination and DNA repair, while the RuvA-RuvB complex plays an important role in the rescue of blocked DNA replication forks via replication fork reversal (RFR). RuvA specifically binds to HJ cruciform DNA, conferring on it an open structure. The RuvB hexamer acts as an ATP-dependent pump, pulling dsDNA into and through the RuvAB complex. HJ branch migration allows RuvC to scan DNA until it finds its consensus sequence, where it cleaves and resolves the cruciform DNA. The polypeptide is Holliday junction branch migration complex subunit RuvA (Jannaschia sp. (strain CCS1)).